The following is a 148-amino-acid chain: Small ribosomal subunit protein eS6 (148 aa).

It belongs to the eukaryotic ribosomal protein eS6 family.

The polypeptide is Small ribosomal subunit protein eS6 (Pyrobaculum aerophilum (strain ATCC 51768 / DSM 7523 / JCM 9630 / CIP 104966 / NBRC 100827 / IM2)).